A 31-amino-acid chain; its full sequence is Cytochrome b6-f complex subunit 6 (31 aa).

Residues 3-23 (ILISYFCFLLVFFLFTLILFI) form a helical membrane-spanning segment.

Belongs to the PetL family. The 4 large subunits of the cytochrome b6-f complex are cytochrome b6, subunit IV (17 kDa polypeptide, PetD), cytochrome f and the Rieske protein, while the 4 small subunits are PetG, PetL, PetM and PetN. The complex functions as a dimer.

The protein localises to the plastid. It localises to the chloroplast thylakoid membrane. Component of the cytochrome b6-f complex, which mediates electron transfer between photosystem II (PSII) and photosystem I (PSI), cyclic electron flow around PSI, and state transitions. PetL is important for photoautotrophic growth as well as for electron transfer efficiency and stability of the cytochrome b6-f complex. The protein is Cytochrome b6-f complex subunit 6 of Welwitschia mirabilis (Tree tumbo).